Consider the following 1142-residue polypeptide: SNF1-activating kinase 1 (1142 aa).

The disordered stretch occupies residues 22-41 (ELEKSGTSSSVSLRSPTKSS). Thr-43 carries the post-translational modification Phosphothreonine. The span at 82-93 (QHQQHISSSLAK) shows a compositional bias: polar residues. The interval 82-107 (QHQQHISSSLAKTPTTTSSFCSSGSS) is disordered. Residues 94–107 (TPTTTSSFCSSGSS) are compositionally biased toward low complexity. In terms of domain architecture, Protein kinase spans 133-448 (YEIIKELGHG…IPAIKKHPFV (316 aa)). Residues 139 to 147 (LGHGQHGKV) and Lys-162 contribute to the ATP site. Residue Asp-277 is the Proton acceptor of the active site. Disordered regions lie at residues 634–678 (SPEA…VLPQ), 694–799 (NSLL…NSPI), 825–875 (SHFN…AYSE), 919–971 (KSSL…QKGS), 1005–1027 (SQPI…KATT), and 1066–1142 (STNA…SALP). Over residues 640–656 (SVSSVPNLPSAPSSTRL) the composition is skewed to polar residues. A compositionally biased stretch (low complexity) spans 694 to 706 (NSLLRNSSSHLTS). Positions 707–741 (YNSGRPSSRTGRMNSRNQNLPKIPNSLSKISTTKL) are enriched in polar residues. A compositionally biased stretch (basic and acidic residues) spans 742–751 (TELRVPKDSE). Residues 785–799 (NINSSDKSGSKNSPI) show a composition bias toward polar residues. 2 stretches are compositionally biased toward low complexity: residues 835–868 (SSQS…RNSS) and 920–936 (SSLN…SSSS). Over residues 958–971 (SKLSELSNSPQKGS) the composition is skewed to polar residues. Position 964 is a phosphoserine (Ser-964). Over residues 1096–1111 (NDEHARNTSCHGDKGQ) the composition is skewed to basic and acidic residues. The residue at position 1126 (Ser-1126) is a Phosphoserine. Residues 1133–1142 (NEEKRRSALP) show a composition bias toward basic and acidic residues.

It belongs to the protein kinase superfamily. Ser/Thr protein kinase family. In terms of assembly, associates with the SNF1 kinase complex. Interacts with SNF1 and REG1. Autophosphorylated.

Its subcellular location is the cytoplasm. The enzyme catalyses L-seryl-[protein] + ATP = O-phospho-L-seryl-[protein] + ADP + H(+). The catalysed reaction is L-threonyl-[protein] + ATP = O-phospho-L-threonyl-[protein] + ADP + H(+). Its function is as follows. Serine/threonine-protein kinase that phosphorylates SNF1, the catalytic subunit of the SNF1 kinase complex. Acts as an activator of the SNF1 kinase complex and controls its nuclear localization upon glucose and nitrogen depletion. Also required for SNF1 kinase activation under other stress conditions like alkaline pH or presence of cadmium. In Saccharomyces cerevisiae (strain ATCC 204508 / S288c) (Baker's yeast), this protein is SNF1-activating kinase 1 (SAK1).